The sequence spans 523 residues: 2-isopropylmalate synthase (523 aa).

Residues 5-267 (VIIFDTTLRD…HTAINHQEIW (263 aa)) enclose the Pyruvate carboxyltransferase domain. Mn(2+) is bound by residues Asp14, His202, His204, and Asn238. Residues 392–523 (RLDYFSVQSG…QHNENNKETV (132 aa)) are regulatory domain.

The protein belongs to the alpha-IPM synthase/homocitrate synthase family. LeuA type 1 subfamily. In terms of assembly, homodimer. Mn(2+) serves as cofactor.

The protein resides in the cytoplasm. The catalysed reaction is 3-methyl-2-oxobutanoate + acetyl-CoA + H2O = (2S)-2-isopropylmalate + CoA + H(+). It participates in amino-acid biosynthesis; L-leucine biosynthesis; L-leucine from 3-methyl-2-oxobutanoate: step 1/4. Functionally, catalyzes the condensation of the acetyl group of acetyl-CoA with 3-methyl-2-oxobutanoate (2-ketoisovalerate) to form 3-carboxy-3-hydroxy-4-methylpentanoate (2-isopropylmalate). In Escherichia coli O81 (strain ED1a), this protein is 2-isopropylmalate synthase.